A 389-amino-acid chain; its full sequence is Lipid-A-disaccharide synthase (389 aa).

The protein belongs to the LpxB family.

It carries out the reaction a lipid X + a UDP-2-N,3-O-bis[(3R)-3-hydroxyacyl]-alpha-D-glucosamine = a lipid A disaccharide + UDP + H(+). It functions in the pathway bacterial outer membrane biogenesis; LPS lipid A biosynthesis. Its function is as follows. Condensation of UDP-2,3-diacylglucosamine and 2,3-diacylglucosamine-1-phosphate to form lipid A disaccharide, a precursor of lipid A, a phosphorylated glycolipid that anchors the lipopolysaccharide to the outer membrane of the cell. The polypeptide is Lipid-A-disaccharide synthase (Verminephrobacter eiseniae (strain EF01-2)).